Reading from the N-terminus, the 261-residue chain is tRNA threonylcarbamoyladenosine dehydratase (261 aa).

A helical transmembrane segment spans residues 230–250 (CANGFGAATMITATFGFFAVS).

Belongs to the HesA/MoeB/ThiF family.

It localises to the membrane. Functionally, catalyzes the ATP-dependent dehydration of threonylcarbamoyladenosine at position 37 (t(6)A37) to form cyclic t(6)A37 (ct(6)A37) in tRNAs that read codons beginning with adenine. In Haemophilus influenzae (strain ATCC 51907 / DSM 11121 / KW20 / Rd), this protein is tRNA threonylcarbamoyladenosine dehydratase (tcdA).